A 1181-amino-acid chain; its full sequence is Clustered mitochondria protein homolog (1181 aa).

Positions alanine 165–glutamine 195 are disordered. Residues valine 176–aspartate 187 show a composition bias toward acidic residues. A Clu domain is found at aspartate 379–leucine 622. A disordered region spans residues glycine 1130–arginine 1181. Residues lysine 1150 to glycine 1159 show a composition bias toward basic residues. The segment covering lysine 1160–leucine 1173 has biased composition (basic and acidic residues).

It belongs to the CLU family. In terms of assembly, may associate with the eukaryotic translation initiation factor 3 (eIF-3) complex.

The protein localises to the cytoplasm. Its function is as follows. mRNA-binding protein involved in proper cytoplasmic distribution of mitochondria. The polypeptide is Clustered mitochondria protein homolog (Yarrowia lipolytica (strain CLIB 122 / E 150) (Yeast)).